The chain runs to 333 residues: MNIYDVSQKAGVSIATVSRVINGNPNVSEKTKQKVLDVMKEIGYTPNVFARGLGLNTMKTIGIMCSDSSDTFLANAVYHLEQNLRKNGYDSFLCCTGYELHTKQKYLKLLLSKRVDAIVMVGSSFLEANKKDNAYIMEAADEVPIMLINGYLSHPRIYCTLCDDHQAVYDAVSKLITQGRKEILYLYNSKSYSGLQKLSGYKAALAAHELPLDENLMQMCPNNLADTKNLLNSLVKQGLNYDAVVTAEDLLAIGTIKFIKDSGRQIPQDVSIIGYNNSLLTTCCDPELTSIDNHVETLCISTISTLMRVLNGNDVPNKTTISNDLIVRKTTNF.

One can recognise an HTH lacI-type domain in the interval 1-55 (MNIYDVSQKAGVSIATVSRVINGNPNVSEKTKQKVLDVMKEIGYTPNVFARGLGL). Positions 3-22 (IYDVSQKAGVSIATVSRVIN) form a DNA-binding region, H-T-H motif.

The protein localises to the cytoplasm. Its function is as follows. Involved in control of pectin and galacturonic acid metabolism. Probably represses a comprehensive set of pectin fermentation genes by binding a conserved palindrome at or downstream of their transcription start site to block transcription. In the presence of galacturonic acid may activate transcription of acetate synthesis and other aspects of carbon metabolism. This chain is HTH-type transcriptional regulator Cphy_2742, found in Lachnoclostridium phytofermentans (strain ATCC 700394 / DSM 18823 / ISDg) (Clostridium phytofermentans).